The primary structure comprises 97 residues: Citrate lyase acyl carrier protein (97 aa).

Residue S14 is modified to O-(phosphoribosyl dephospho-coenzyme A)serine.

Belongs to the CitD family. As to quaternary structure, oligomer with a subunit composition of (alpha,beta,gamma)6.

The protein resides in the cytoplasm. In terms of biological role, covalent carrier of the coenzyme of citrate lyase. In Leuconostoc citreum (strain KM20), this protein is Citrate lyase acyl carrier protein.